We begin with the raw amino-acid sequence, 295 residues long: 4-hydroxy-tetrahydrodipicolinate synthase (295 aa).

Pyruvate is bound at residue T46. Y134 (proton donor/acceptor) is an active-site residue. K162 (schiff-base intermediate with substrate) is an active-site residue. V204 contributes to the pyruvate binding site.

The protein belongs to the DapA family. As to quaternary structure, homotetramer; dimer of dimers.

It localises to the cytoplasm. The enzyme catalyses L-aspartate 4-semialdehyde + pyruvate = (2S,4S)-4-hydroxy-2,3,4,5-tetrahydrodipicolinate + H2O + H(+). The protein operates within amino-acid biosynthesis; L-lysine biosynthesis via DAP pathway; (S)-tetrahydrodipicolinate from L-aspartate: step 3/4. Its function is as follows. Catalyzes the condensation of (S)-aspartate-beta-semialdehyde [(S)-ASA] and pyruvate to 4-hydroxy-tetrahydrodipicolinate (HTPA). In Oceanobacillus iheyensis (strain DSM 14371 / CIP 107618 / JCM 11309 / KCTC 3954 / HTE831), this protein is 4-hydroxy-tetrahydrodipicolinate synthase.